An 86-amino-acid polypeptide reads, in one-letter code: High affinity immunoglobulin epsilon receptor subunit gamma (86 aa).

Positions Met1–Ala18 are cleaved as a signal peptide. Residues Leu19–Gln23 lie on the Extracellular side of the membrane. The helical transmembrane segment at Leu24–Cys44 threads the bilayer. Over Arg45–Gln86 the chain is Cytoplasmic. The 29-residue stretch at Ala54–Glu82 folds into the ITAM domain. Tyr65 is modified (phosphotyrosine). The residue at position 69 (Ser69) is a Phosphoserine. Tyr76 is modified (phosphotyrosine). The residue at position 78 (Thr78) is a Phosphothreonine.

It belongs to the CD3Z/FCER1G family. In terms of assembly, igE Fc receptor is a tetramer of an alpha chain, a beta chain, and two disulfide linked gamma chains. Associates with FCGR1A; forms a functional signaling complex. The signaling subunit of immunoglobulin gamma (IgG) Fc receptor complex. As a homodimer or a heterodimer of CD247 and FCER1G, associates with the ligand binding subunit FCGR3A to form a functional receptor complex. Associates with CLEC6A. Interacts with CLEC4E. Interacts (via ITAM domain) with SYK (via SH2 domains); activates SYK, enabling integrin-mediated activation of neutrophils and macrophages. Interacts with CSF2RB and recruits SYK in response to IL3 stimulation; this interaction is direct. Interacts with CD300LH; the interaction may be indirect. Interacts with CD300LD. Interacts with TARM1.

It is found in the cell membrane. Its function is as follows. Adapter protein containing an immunoreceptor tyrosine-based activation motif (ITAM) that transduces activation signals from various immunoreceptors. As a component of the high-affinity immunoglobulin E (IgE) receptor, mediates allergic inflammatory signaling in mast cells. As a constitutive component of interleukin-3 receptor complex, selectively mediates interleukin 4/IL4 production by basophils priming T-cells toward effector T-helper 2 subset. Associates with pattern recognition receptors CLEC4D and CLEC4E to form a functional signaling complex in myeloid cells. Binding of mycobacterial trehalose 6,6'-dimycolate (TDM) to this receptor complex leads to phosphorylation of ITAM, triggering activation of SYK, CARD9 and NF-kappa-B, consequently driving maturation of antigen-presenting cells and shaping antigen-specific priming of T-cells toward effector T-helper 1 and T-helper 17 cell subtypes. May function cooperatively with other activating receptors. Functionally linked to integrin beta-2/ITGB2-mediated neutrophil activation. Also involved in integrin alpha-2/ITGA2-mediated platelet activation. In Macaca fascicularis (Crab-eating macaque), this protein is High affinity immunoglobulin epsilon receptor subunit gamma (FCER1G).